The primary structure comprises 296 residues: tRNA dimethylallyltransferase (296 aa).

ATP is bound at residue 9–16; it reads GTTASGKS. Residue 11–16 coordinates substrate; that stretch reads TASGKS. An interaction with substrate tRNA region spans residues 34–37; that stretch reads DSLA.

This sequence belongs to the IPP transferase family. Monomer. Mg(2+) serves as cofactor.

The catalysed reaction is adenosine(37) in tRNA + dimethylallyl diphosphate = N(6)-dimethylallyladenosine(37) in tRNA + diphosphate. Catalyzes the transfer of a dimethylallyl group onto the adenine at position 37 in tRNAs that read codons beginning with uridine, leading to the formation of N6-(dimethylallyl)adenosine (i(6)A). The protein is tRNA dimethylallyltransferase of Campylobacter curvus (strain 525.92).